A 903-amino-acid polypeptide reads, in one-letter code: Dual 3',5'-cyclic-AMP and -GMP phosphodiesterase 11A (903 aa).

GAF domains lie at 175 to 324 (DLTS…GIAI) and 356 to 512 (DLEK…GLGI). S378 contributes to the 3',5'-cyclic GMP binding site. Positions 542 to 866 (SKTEVDKFKA…VKWEELDKKR (325 aa)) constitute a PDEase domain. The Proton donor role is filled by H618. H622, H658, D659, and D770 together coordinate a divalent metal cation. The disordered stretch occupies residues 863 to 903 (DKKRQHDHGASVPASPCSAAEGSETGGVPCCSNNTPPTHVS). A compositionally biased stretch (polar residues) spans 893–903 (CSNNTPPTHVS).

This sequence belongs to the cyclic nucleotide phosphodiesterase family. A divalent metal cation is required as a cofactor.

It localises to the cytoplasm. The protein localises to the cytosol. The catalysed reaction is 3',5'-cyclic GMP + H2O = GMP + H(+). The enzyme catalyses 3',5'-cyclic AMP + H2O = AMP + H(+). Functionally, plays a role in signal transduction by regulating the intracellular concentration of cyclic nucleotides cAMP and cGMP. Catalyzes the hydrolysis of both cAMP and cGMP to 5'-AMP and 5'-GMP, respectively. This is Dual 3',5'-cyclic-AMP and -GMP phosphodiesterase 11A (pde11a) from Takifugu rubripes (Japanese pufferfish).